A 271-amino-acid polypeptide reads, in one-letter code: Shikimate dehydrogenase-like protein HI_0607 (271 aa).

Catalysis depends on Lys-67, which acts as the Proton donor/acceptor. Position 103 (Asp-103) interacts with substrate. NADP(+)-binding positions include 126–130 (GSGGM), Lys-154, and Ser-184.

This sequence belongs to the shikimate dehydrogenase-like family. In terms of assembly, homodimer.

It catalyses the reaction shikimate + NADP(+) = 3-dehydroshikimate + NADPH + H(+). In vitro, is able to catalyze the NADP(+)-dependent oxidation of shikimate to 3-dehydroshikimate. However, has much lower activity than classical shikimate dehydrogenases AroE, indicating that shikimate may not be the biological substrate. Cannot utilize NAD(+) instead of NADP(+). Is not able to catalyze the oxidation of quinate. The sequence is that of Shikimate dehydrogenase-like protein HI_0607 from Haemophilus influenzae (strain ATCC 51907 / DSM 11121 / KW20 / Rd).